The following is a 218-amino-acid chain: Glutathione S-transferase Y1 (218 aa).

A GST N-terminal domain is found at 2–88 (PMILGYWNVR…YIARKHNLCG (87 aa)). Glutathione contacts are provided by residues 7–8 (YW), 46–50 (WLNEK), 59–60 (NL), and 72–73 (QS). The region spanning 90–208 (TEEERIRVDI…KTSRFLRRPI (119 aa)) is the GST C-terminal domain. Tyr-116 serves as a coordination point for substrate.

It belongs to the GST superfamily. Mu family. As to quaternary structure, homodimer.

It is found in the cytoplasm. It carries out the reaction RX + glutathione = an S-substituted glutathione + a halide anion + H(+). Conjugation of reduced glutathione to a wide number of exogenous and endogenous hydrophobic electrophiles. The protein is Glutathione S-transferase Y1 of Cricetulus longicaudatus (Long-tailed dwarf hamster).